Reading from the N-terminus, the 57-residue chain is Large ribosomal subunit protein bL32 (57 aa).

It belongs to the bacterial ribosomal protein bL32 family.

The sequence is that of Large ribosomal subunit protein bL32 from Streptomyces avermitilis (strain ATCC 31267 / DSM 46492 / JCM 5070 / NBRC 14893 / NCIMB 12804 / NRRL 8165 / MA-4680).